Reading from the N-terminus, the 525-residue chain is GMP synthase [glutamine-hydrolyzing] (525 aa).

A Glutamine amidotransferase type-1 domain is found at 9 to 207; the sequence is RILILDFGSQ…VRDICQCEAL (199 aa). Catalysis depends on Cys86, which acts as the Nucleophile. Catalysis depends on residues His181 and Glu183. Residues 208–400 enclose the GMPS ATP-PPase domain; sequence WTPAKIIDDA…LGLPYDMLYR (193 aa). Residue 235–241 coordinates ATP; sequence SGGVDSS.

As to quaternary structure, homodimer.

It catalyses the reaction XMP + L-glutamine + ATP + H2O = GMP + L-glutamate + AMP + diphosphate + 2 H(+). The protein operates within purine metabolism; GMP biosynthesis; GMP from XMP (L-Gln route): step 1/1. Catalyzes the synthesis of GMP from XMP. The polypeptide is GMP synthase [glutamine-hydrolyzing] (Escherichia fergusonii (strain ATCC 35469 / DSM 13698 / CCUG 18766 / IAM 14443 / JCM 21226 / LMG 7866 / NBRC 102419 / NCTC 12128 / CDC 0568-73)).